The sequence spans 86 residues: Cytochrome c6 (86 aa).

Heme c is bound by residues cysteine 14, cysteine 17, histidine 18, and methionine 58.

It belongs to the cytochrome c family. PetJ subfamily. As to quaternary structure, monomer. Post-translationally, binds 1 heme c group covalently per subunit.

It localises to the cellular thylakoid lumen. In terms of biological role, functions as an electron carrier between membrane-bound cytochrome b6-f and photosystem I in oxygenic photosynthesis. This Anabaena variabilis protein is Cytochrome c6 (petJ).